A 397-amino-acid polypeptide reads, in one-letter code: MGKAKFERNKPHCNIGTIGHVDHGKTTLTAAITKTLHDRLGTGEAVAFDKIDKAPEERERGITISTSHVEYESKARHYAHVDCPGHADYVKNMITGAAQMDGAILVVAATDGVMAQTKEHILLSRQVGVPYIVVFMNKCDMVDDPELLELVEMEIRELLSEYEFPGDDTPIIQGSALRALEDPNSQWGDKILELFDAVDTWIPDPQRATDKPFLMPIEDVFSITGRGTVATGRVERGVLHVSEEVEIVGVKEETRKVVVTGIEMFRKLLDEAQAGDNIGALLRGVQRTDIERGQVLCKPGTIKCYKKFTAQVYVLTKDEGGRHTPFFNNYRPQFYFRTTDVTGVCNLPEGVEMCMPGDNIEMNIELIHPIAMEQGLGFAIREGGRTVGSGKVATIIG.

The tr-type G domain maps to 10–206 (KPHCNIGTIG…AVDTWIPDPQ (197 aa)). Positions 19–26 (GHVDHGKT) are G1. 19–26 (GHVDHGKT) is a GTP binding site. Threonine 26 serves as a coordination point for Mg(2+). The interval 61–65 (GITIS) is G2. The tract at residues 82-85 (DCPG) is G3. Residues 82–86 (DCPGH) and 137–140 (NKCD) contribute to the GTP site. Residues 137 to 140 (NKCD) are G4. The interval 175–177 (SAL) is G5.

This sequence belongs to the TRAFAC class translation factor GTPase superfamily. Classic translation factor GTPase family. EF-Tu/EF-1A subfamily. Monomer.

Its subcellular location is the cytoplasm. It catalyses the reaction GTP + H2O = GDP + phosphate + H(+). Its function is as follows. GTP hydrolase that promotes the GTP-dependent binding of aminoacyl-tRNA to the A-site of ribosomes during protein biosynthesis. In Lachnoclostridium phytofermentans (strain ATCC 700394 / DSM 18823 / ISDg) (Clostridium phytofermentans), this protein is Elongation factor Tu.